Consider the following 370-residue polypeptide: TD and POZ domain-containing protein 4 (370 aa).

In terms of domain architecture, MATH spans 19-149; that stretch reads KLCYRWTISN…DDKFTLLCKV (131 aa). The 64-residue stretch at 188 to 251 folds into the BTB domain; sequence TDCSLLVAGH…MMGFIYTGKV (64 aa).

Belongs to the Tdpoz family.

The sequence is that of TD and POZ domain-containing protein 4 from Mus musculus (Mouse).